Here is a 361-residue protein sequence, read N- to C-terminus: 3-dehydroquinate synthase (361 aa).

NAD(+) contacts are provided by residues 106 to 110, 130 to 131, Lys-143, and Lys-152; these read GVVGD and TT. Residues Glu-185, His-248, and His-265 each contribute to the Zn(2+) site.

Belongs to the sugar phosphate cyclases superfamily. Dehydroquinate synthase family. NAD(+) is required as a cofactor. It depends on Co(2+) as a cofactor. Zn(2+) serves as cofactor.

It is found in the cytoplasm. The enzyme catalyses 7-phospho-2-dehydro-3-deoxy-D-arabino-heptonate = 3-dehydroquinate + phosphate. It participates in metabolic intermediate biosynthesis; chorismate biosynthesis; chorismate from D-erythrose 4-phosphate and phosphoenolpyruvate: step 2/7. Functionally, catalyzes the conversion of 3-deoxy-D-arabino-heptulosonate 7-phosphate (DAHP) to dehydroquinate (DHQ). The protein is 3-dehydroquinate synthase of Leptospira interrogans serogroup Icterohaemorrhagiae serovar copenhageni (strain Fiocruz L1-130).